The following is a 61-amino-acid chain: Small ribosomal subunit protein uS14 (61 aa).

Zn(2+) contacts are provided by cysteine 24, cysteine 27, cysteine 40, and cysteine 43.

This sequence belongs to the universal ribosomal protein uS14 family. Zinc-binding uS14 subfamily. Part of the 30S ribosomal subunit. Contacts proteins S3 and S10. The cofactor is Zn(2+).

Functionally, binds 16S rRNA, required for the assembly of 30S particles and may also be responsible for determining the conformation of the 16S rRNA at the A site. In Mycoplasma pneumoniae (strain ATCC 29342 / M129 / Subtype 1) (Mycoplasmoides pneumoniae), this protein is Small ribosomal subunit protein uS14.